A 293-amino-acid chain; its full sequence is Mating-type protein A-1 (293 aa).

The alpha box DNA-binding region spans 42–97 (AAKKKVNGFMGFRSYYSPLFSQLPQKERSPFMTILWQHDPFHNEWDFMCSVYSSIR).

This sequence belongs to the MATALPHA1 family.

Its subcellular location is the nucleus. Its function is as follows. Mating type proteins are sequence specific DNA-binding proteins that act as master switches in yeast differentiation by controlling gene expression in a cell type-specific fashion. Transcriptional activator that induces the transcription of A-specific genes like mating factor ccg-4. Required for mating as an A-cell and for blocking of heterokaryon formation (vegetative incompatibility). The chain is Mating-type protein A-1 (mtA-1) from Neurospora crassa (strain ATCC 24698 / 74-OR23-1A / CBS 708.71 / DSM 1257 / FGSC 987).